The following is a 114-amino-acid chain: MLNYFFKKKSKLLKSTNFQYVFSNPCNKNTFHINILGRSNLLGHPRLGLSISRKNIKHAYRRNKIKRLIRETFRLLQHRLISMDFVVIAKKNIVYLNNKKIVNILEYIWSNYQR.

The protein belongs to the RnpA family. Consists of a catalytic RNA component (M1 or rnpB) and a protein subunit.

The enzyme catalyses Endonucleolytic cleavage of RNA, removing 5'-extranucleotides from tRNA precursor.. In terms of biological role, RNaseP catalyzes the removal of the 5'-leader sequence from pre-tRNA to produce the mature 5'-terminus. It can also cleave other RNA substrates such as 4.5S RNA. The protein component plays an auxiliary but essential role in vivo by binding to the 5'-leader sequence and broadening the substrate specificity of the ribozyme. This is Ribonuclease P protein component from Buchnera aphidicola subsp. Schizaphis graminum (strain Sg).